An 89-amino-acid chain; its full sequence is MAISQEKKNEIMKKYARHEGDTGSAEVQIAVLTADINELNDHIKAHKKDYASYRGLMKKIGHRRNLLAYLRNTDVQRYRELVKSLGLRR.

The protein belongs to the universal ribosomal protein uS15 family. Part of the 30S ribosomal subunit. Forms a bridge to the 50S subunit in the 70S ribosome, contacting the 23S rRNA.

Functionally, one of the primary rRNA binding proteins, it binds directly to 16S rRNA where it helps nucleate assembly of the platform of the 30S subunit by binding and bridging several RNA helices of the 16S rRNA. Its function is as follows. Forms an intersubunit bridge (bridge B4) with the 23S rRNA of the 50S subunit in the ribosome. This chain is Small ribosomal subunit protein uS15, found in Ligilactobacillus salivarius (strain UCC118) (Lactobacillus salivarius).